Consider the following 203-residue polypeptide: A-type ATP synthase subunit E (203 aa).

This sequence belongs to the V-ATPase E subunit family. In terms of assembly, might form a homodimer. Interacts with subunit H via residues 41-60. The A-type ATPase is composed of subunits A(3), B(3), C, D, E(1 or 2), F, H(2), I and K(x).

It localises to the cell membrane. Functionally, component of the A-type ATP synthase that produces ATP from ADP in the presence of a proton gradient across the membrane. This Methanocaldococcus jannaschii (strain ATCC 43067 / DSM 2661 / JAL-1 / JCM 10045 / NBRC 100440) (Methanococcus jannaschii) protein is A-type ATP synthase subunit E.